The sequence spans 888 residues: Semaphorin-6B (888 aa).

Positions 1 to 25 are cleaved as a signal peptide; it reads MQTPRASPPRPALLLLLLLLGGAHG. Residues 26–603 lie on the Extracellular side of the membrane; sequence LFPEEPPPLS…VSVNLLVTSS (578 aa). The Sema domain maps to 31–523; it reads PPPLSVAPRD…FPRCVVRVPV (493 aa). Asn-74 carries an N-linked (GlcNAc...) asparagine glycan. 2 disulfides stabilise this stretch: Cys-116–Cys-126 and Cys-144–Cys-153. Asn-155, Asn-167, and Asn-291 each carry an N-linked (GlcNAc...) asparagine glycan. 2 disulfide bridges follow: Cys-267–Cys-378 and Cys-292–Cys-337. N-linked (GlcNAc...) asparagine glycosylation is found at Asn-386, Asn-441, and Asn-462. 4 disulfides stabilise this stretch: Cys-486/Cys-517, Cys-526/Cys-544, Cys-532/Cys-578, and Cys-536/Cys-552. The chain crosses the membrane as a helical span at residues 604–624; the sequence is VAAFVVGAVVSGFSVGWFVGL. Residues 625 to 888 lie on the Cytoplasmic side of the membrane; it reads RERRELARRK…GADRTAPPVP (264 aa). Disordered regions lie at residues 651 to 679, 695 to 742, and 757 to 888; these read VSRL…PPEA, LQGG…HPLL, and RAPE…PPVP. Gly residues predominate over residues 661–674; it reads GPGGRGGGGGGGAG. Position 665 is an omega-N-methylarginine (Arg-665). Residues 706 to 717 are compositionally biased toward low complexity; it reads LLPTPEQTPLPQ.

The protein belongs to the semaphorin family. (Microbial infection) Interacts with P.sordellii toxin TcsL; semaphorins SEMA6A and SEMA6B constitute the major host receptors for TcsL in the vascular endothelium. As to expression, expressed in the brain in GABAergic neurons.

It localises to the cell membrane. Functionally, functions as a cell surface repellent for mossy fibers of developing neurons in the hippocampus where it plays a role in axon guidance. May function through the PLXNA4 receptor expressed by mossy cell axons. (Microbial infection) Acts as a receptor for P.sordellii toxin TcsL in the in the vascular endothelium. The polypeptide is Semaphorin-6B (SEMA6B) (Homo sapiens (Human)).